A 446-amino-acid chain; its full sequence is Xylose isomerase 1 (446 aa).

Active-site residues include His-109 and Asp-112. 7 residues coordinate Mg(2+): Glu-240, Glu-276, His-279, Asp-304, Asp-315, Asp-317, and Asp-347.

It belongs to the xylose isomerase family. As to quaternary structure, homotetramer. The cofactor is Mg(2+).

Its subcellular location is the cytoplasm. It catalyses the reaction alpha-D-xylose = alpha-D-xylulofuranose. The polypeptide is Xylose isomerase 1 (Xanthomonas campestris pv. campestris (strain 8004)).